A 209-amino-acid chain; its full sequence is MEFLLLLSLALFSDAMVMDEKVKSGVELETASAVCVYDAYYKDHTKYWCRGYFRDSCNIIAFTPNSTNRVALKDTGNQLIITISCLVKEDTGWYWCGIQRDLARDDMDFTQLIVTDNREDRANGFSSDPSGNRTRSCRASKAVQKAEGSRMSILIICILITSLGIIFIISHLSRGRRSQRNREVTGKSISRNPQASQGPSMVSITLARI.

The first 15 residues, 1 to 15 (MEFLLLLSLALFSDA), serve as a signal peptide directing secretion. A helical membrane pass occupies residues 152–172 (SILIICILITSLGIIFIISHL). Positions 179-201 (QRNREVTGKSISRNPQASQGPSM) are disordered. Positions 187 to 201 (KSISRNPQASQGPSM) are enriched in polar residues.

It localises to the membrane. The polypeptide is Transmembrane domain-containing protein TMIGD3 (Tmigd3) (Mus musculus (Mouse)).